A 314-amino-acid polypeptide reads, in one-letter code: Methionyl-tRNA formyltransferase (314 aa).

Residue 110-113 coordinates (6S)-5,6,7,8-tetrahydrofolate; the sequence is SLLP.

The protein belongs to the Fmt family.

The catalysed reaction is L-methionyl-tRNA(fMet) + (6R)-10-formyltetrahydrofolate = N-formyl-L-methionyl-tRNA(fMet) + (6S)-5,6,7,8-tetrahydrofolate + H(+). In terms of biological role, attaches a formyl group to the free amino group of methionyl-tRNA(fMet). The formyl group appears to play a dual role in the initiator identity of N-formylmethionyl-tRNA by promoting its recognition by IF2 and preventing the misappropriation of this tRNA by the elongation apparatus. The protein is Methionyl-tRNA formyltransferase of Lactobacillus johnsonii (strain CNCM I-12250 / La1 / NCC 533).